The sequence spans 519 residues: B3 domain-containing protein Os03g0620400 (519 aa).

The TF-B3 1 DNA-binding region spans 26 to 119 (MKCFHLQMSA…RFEVLILDSD (94 aa)). Residues 138–218 (ERNAAPVDIS…DPQMPPGRNY (81 aa)) form a disordered region. A compositionally biased stretch (acidic residues) spans 189-209 (SGEEGTDSSTSEDESSYELDD). DNA-binding regions (TF-B3) lie at residues 249–349 (VAIM…LRET) and 416–516 (YVSI…IRRN).

It is found in the nucleus. This Oryza sativa subsp. japonica (Rice) protein is B3 domain-containing protein Os03g0620400.